The chain runs to 274 residues: Putative ABC transporter ATP-binding protein alr3946 (274 aa).

The region spanning 6–242 (LTFEQVYYTY…REILDSIELG (237 aa)) is the ABC transporter domain. Residue 40 to 47 (GRNGCGKT) participates in ATP binding.

The protein belongs to the ABC transporter superfamily.

It localises to the cell inner membrane. In terms of biological role, probably part of an ABC transporter complex. Responsible for energy coupling to the transport system. This chain is Putative ABC transporter ATP-binding protein alr3946, found in Nostoc sp. (strain PCC 7120 / SAG 25.82 / UTEX 2576).